Consider the following 259-residue polypeptide: Exotoxin A regulatory protein (259 aa).

Its subcellular location is the cell inner membrane. Positive regulation of toxA gene transcription. This is Exotoxin A regulatory protein (toxR) from Pseudomonas aeruginosa (strain ATCC 15692 / DSM 22644 / CIP 104116 / JCM 14847 / LMG 12228 / 1C / PRS 101 / PAO1).